A 290-amino-acid chain; its full sequence is Beta-lactamase OXY-2 (290 aa).

Positions 1–27 are cleaved as a signal peptide; the sequence is MIKSSWRKIAMLAAAVPLLLASGALWA. Catalysis depends on S72, which acts as the Acyl-ester intermediate. 236-238 contributes to the substrate binding site; the sequence is KTG.

Belongs to the class-A beta-lactamase family.

It carries out the reaction a beta-lactam + H2O = a substituted beta-amino acid. Functionally, hydrolyzes broad-spectrum beta-lactam antibiotics. Active against all third-generation cephalosporins but ceftazidime. The chain is Beta-lactamase OXY-2 (bla) from Klebsiella oxytoca.